The chain runs to 397 residues: Chorismate synthase (397 aa).

NADP(+)-binding residues include arginine 40 and arginine 46. FMN is bound by residues 129–131 (RAS), 257–258 (QA), glycine 302, 317–321 (KPIAT), and arginine 343.

The protein belongs to the chorismate synthase family. As to quaternary structure, homotetramer. FMNH2 serves as cofactor.

It catalyses the reaction 5-O-(1-carboxyvinyl)-3-phosphoshikimate = chorismate + phosphate. It participates in metabolic intermediate biosynthesis; chorismate biosynthesis; chorismate from D-erythrose 4-phosphate and phosphoenolpyruvate: step 7/7. Functionally, catalyzes the anti-1,4-elimination of the C-3 phosphate and the C-6 proR hydrogen from 5-enolpyruvylshikimate-3-phosphate (EPSP) to yield chorismate, which is the branch point compound that serves as the starting substrate for the three terminal pathways of aromatic amino acid biosynthesis. This reaction introduces a second double bond into the aromatic ring system. This is Chorismate synthase from Chlorobium phaeobacteroides (strain BS1).